The chain runs to 406 residues: Sensor histidine kinase YxjM (406 aa).

Topologically, residues 1-13 are cytoplasmic; it reads MNGQTPARHYYKK. Residues 14–34 traverse the membrane as a helical segment; sequence LVPSLILILNCIQFLSHPTKA. At 35-36 the chain is on the extracellular side; that stretch reads DP. A helical transmembrane segment spans residues 37-57; it reads ILLAFVFAVYLAFIWIIPYVA. Residue Ser58 is a topological domain, cytoplasmic. A run of 2 helical transmembrane segments spans residues 59 to 79 and 80 to 100; these read TAVS…FWAV and SGQE…YAAF. A topological domain (cytoplasmic) is located at residue Arg101. A helical membrane pass occupies residues 102-122; sequence LPSRLSLIFTACLIGGNILLL. Over 123–125 the chain is Extracellular; it reads SSQ. The chain crosses the membrane as a helical span at residues 126–146; the sequence is GGSLNTIISNISIMLGLYVLF. Topologically, residues 147–406 are cytoplasmic; sequence SSMRFRREAR…TNKEQKDEQR (260 aa). A Histidine kinase domain is found at 209-396; it reads DIHDSIGHEL…KIELSLPLMT (188 aa). At His211 the chain carries Phosphohistidine; by autocatalysis.

The protein resides in the cell membrane. It carries out the reaction ATP + protein L-histidine = ADP + protein N-phospho-L-histidine.. Its function is as follows. Probable member of the two-component regulatory system YxjM/YxjL. May activate YxjL by phosphorylation. In Bacillus subtilis (strain 168), this protein is Sensor histidine kinase YxjM (yxjM).